The sequence spans 1337 residues: DNA mismatch repair protein Msh6 (1337 aa).

One can recognise a PWWP domain in the interval 68 to 130 (PGDLVWAKME…IKYLRPYKGS (63 aa)). Residues 170–310 (AVCSEPSDTE…SEAPKRAAPV (141 aa)) are disordered. A compositionally biased stretch (acidic residues) spans 176-187 (SDTEEAEEEEME). Over residues 226–248 (VLDSDSDRDGSDVEFKPDVKEAS) the composition is skewed to basic and acidic residues. The span at 257–272 (DENEATDVETDEESIE) shows a compositional bias: acidic residues. Basic residues predominate over residues 279-292 (PSKRKRGNVSKPSK). Residues 294-305 (SSLENEHSEAPK) show a composition bias toward basic and acidic residues. 1111–1118 (GPNMGGKS) contributes to the ATP binding site.

It belongs to the DNA mismatch repair MutS family.

The protein resides in the nucleus. In terms of biological role, component of the post-replicative DNA mismatch repair system (MMR). Involved in B cell growth by positively regulating B cell proliferation and controlling replication efficiency. Controls cell cycle to prevent re-replication and defects in DNA damage-induced G2 checkpoint. Doesn't seem to counteract or control the immunoglobulin gene conversion (Ig GC) and to contribute to guanine/uracil mismatch repair. This chain is DNA mismatch repair protein Msh6, found in Gallus gallus (Chicken).